The chain runs to 443 residues: Threonine/serine transporter TdcC (443 aa).

A run of 11 helical transmembrane segments spans residues 22-42 (TTWT…FFPI), 44-64 (AGFG…PIAF), 97-117 (GVVI…IYGV), 140-160 (FVAL…KDLM), 163-183 (VMSF…LSLI), 207-227 (ILVT…FSPI), 259-279 (ASLL…FTLS), 319-339 (ASII…LGTL), 366-386 (ISMI…PNIL), 389-409 (IEAM…MFAI), and 423-443 (ENLF…YKLF).

This sequence belongs to the amino acid/polyamine transporter 2 family. SdaC/TdcC subfamily.

The protein resides in the cell inner membrane. The enzyme catalyses L-threonine(in) + H(+)(in) = L-threonine(out) + H(+)(out). It carries out the reaction L-serine(in) + H(+)(in) = L-serine(out) + H(+)(out). Involved in the import of threonine and serine into the cell, with the concomitant import of a proton (symport system). This chain is Threonine/serine transporter TdcC, found in Enterobacter sp. (strain 638).